The following is a 693-amino-acid chain: MAREFSLEKTRNIGIMAHVDAGKTTTTERILYYTGKIHKIGETHEGASQMDWMEQEQERGITITSAATTAQWNNHRVNIIDTPGHVDFTIEVQRSLRVLDGAVTVLDSQSGVEPQTETVWRQATEYGVPRIVFANKMDKIGADFLYSVSTLHDRLQANAHPIQLPIGSEDDFRGIIDLIKMKAEIYTNDLGTDILEEDIPAEYLDQAQEYREKLVEAVAETDEDLMMKYLEGEEITNEELKAGIRKATINVEFFPVLCGSAFKNKGVQLMLDAVIDYLPSPLDIPAIKGINPDTDEEETRPASDEEPFAALAFKIMTDPFVGRLTFFRVYSGVLQSGSYVLNTSKGKRERIGRILQMHANSRQEIDTVYSGDIAAAVGLKDTTTGDSLTDEKAKIILESINVPEPVIQLMVEPKSKADQDKMGIALQKLAEEDPTFRVETNVETGETVISGMGELHLDVLVDRMRREFKVEANVGAPQVSYRETFRASTQARGFFKRQSGGKGQFGDVWIEFTPNEEGKGFEFENAIVGGVVPREFIPAVEKGLVESMANGVLAGYPMVDVKAKLYDGSYHDVDSSETAFKIAASLALKEAAKSAQPAILEPMMLVTITVPEENLGDVMGHVTARRGRVDGMEAHGNSQIVRAYVPLAEMFGYATVLRSASQGRGTFMMVFDHYEDVPKSVQEEIIKKNKGED.

The 275-residue stretch at 8-282 (EKTRNIGIMA…AVIDYLPSPL (275 aa)) folds into the tr-type G domain. Residues 17-24 (AHVDAGKT), 81-85 (DTPGH), and 135-138 (NKMD) each bind GTP.

It belongs to the TRAFAC class translation factor GTPase superfamily. Classic translation factor GTPase family. EF-G/EF-2 subfamily.

The protein localises to the cytoplasm. Functionally, catalyzes the GTP-dependent ribosomal translocation step during translation elongation. During this step, the ribosome changes from the pre-translocational (PRE) to the post-translocational (POST) state as the newly formed A-site-bound peptidyl-tRNA and P-site-bound deacylated tRNA move to the P and E sites, respectively. Catalyzes the coordinated movement of the two tRNA molecules, the mRNA and conformational changes in the ribosome. The protein is Elongation factor G of Streptococcus pneumoniae (strain Hungary19A-6).